Here is a 418-residue protein sequence, read N- to C-terminus: Protein YdhQ (418 aa).

This is Protein YdhQ (ydhQ) from Escherichia coli (strain K12).